Here is a 77-residue protein sequence, read N- to C-terminus: Acyl carrier protein (77 aa).

The Carrier domain maps to 2-77 (SEKLQKIQAL…DAVAYIEERS (76 aa)). At Ser37 the chain carries O-(pantetheine 4'-phosphoryl)serine.

The protein belongs to the acyl carrier protein (ACP) family. 4'-phosphopantetheine is transferred from CoA to a specific serine of apo-ACP by AcpS. This modification is essential for activity because fatty acids are bound in thioester linkage to the sulfhydryl of the prosthetic group.

It localises to the cytoplasm. Its pathway is lipid metabolism; fatty acid biosynthesis. Carrier of the growing fatty acid chain in fatty acid biosynthesis. The sequence is that of Acyl carrier protein from Desulforudis audaxviator (strain MP104C).